The primary structure comprises 171 residues: Ribosome maturation factor RimP (171 aa).

The protein belongs to the RimP family.

The protein localises to the cytoplasm. Its function is as follows. Required for maturation of 30S ribosomal subunits. In Oleidesulfovibrio alaskensis (strain ATCC BAA-1058 / DSM 17464 / G20) (Desulfovibrio alaskensis), this protein is Ribosome maturation factor RimP.